Consider the following 138-residue polypeptide: MTKSELVEKLAARFPQLLLRDADIAVKTILDAMSDALADGHRIEIRGFGSFGLNRRPPRVGRNPKSGEKVLVPEKRVPHFKAGKELRERVDRSLERQGDSSSEGEPVSLTAVKAARQAGGHHAAGFPAEATPTLVMSR.

A compositionally biased stretch (basic and acidic residues) spans 81-98 (KAGKELRERVDRSLERQG). The interval 81–138 (KAGKELRERVDRSLERQGDSSSEGEPVSLTAVKAARQAGGHHAAGFPAEATPTLVMSR) is disordered.

It belongs to the bacterial histone-like protein family. As to quaternary structure, heterodimer of an alpha and a beta chain.

Its function is as follows. This protein is one of the two subunits of integration host factor, a specific DNA-binding protein that functions in genetic recombination as well as in transcriptional and translational control. The polypeptide is Integration host factor subunit beta (Ralstonia nicotianae (strain ATCC BAA-1114 / GMI1000) (Ralstonia solanacearum)).